We begin with the raw amino-acid sequence, 284 residues long: Tropomyosin isoforms a/b/d/f (284 aa).

Residues M1 to Y284 are a coiled coil. Residues E40–V78 form a disordered region.

The protein belongs to the tropomyosin family. As to expression, isoform a and isoform d are expressed in body wall muscles, vulva, anus muscles and male tail muscles. Located to the myofibrils of thin actin filaments.

It localises to the cytoplasm. It is found in the myofibril. The protein resides in the sarcomere. Its subcellular location is the i band. In terms of biological role, tropomyosin, in association with the troponin complex, plays a central role in the calcium dependent regulation of muscle contraction. Involved in muscle actin filament organization and muscle arm extension and morphology. Protects actin filaments from depolymerization by unc-60 in vitro. Also has a role in male mating behavior by regulating the copulatory spicules. Binds to F-actin. In Caenorhabditis elegans, this protein is Tropomyosin isoforms a/b/d/f (lev-11).